The following is a 503-amino-acid chain: ATP synthase subunit alpha, chloroplastic (503 aa).

Residue 170 to 177 coordinates ATP; that stretch reads GDRQTGKT.

It belongs to the ATPase alpha/beta chains family. In terms of assembly, F-type ATPases have 2 components, CF(1) - the catalytic core - and CF(0) - the membrane proton channel. CF(1) has five subunits: alpha(3), beta(3), gamma(1), delta(1), epsilon(1). CF(0) has four main subunits: a, b, b' and c.

It is found in the plastid. Its subcellular location is the chloroplast thylakoid membrane. The enzyme catalyses ATP + H2O + 4 H(+)(in) = ADP + phosphate + 5 H(+)(out). Functionally, produces ATP from ADP in the presence of a proton gradient across the membrane. The alpha chain is a regulatory subunit. The sequence is that of ATP synthase subunit alpha, chloroplastic from Trieres chinensis (Marine centric diatom).